Consider the following 287-residue polypeptide: 4-diphosphocytidyl-2-C-methyl-D-erythritol kinase (287 aa).

Lys-11 is an active-site residue. An ATP-binding site is contributed by 93-103 (PFGAGLGGGSS). Asp-135 is a catalytic residue.

It belongs to the GHMP kinase family. IspE subfamily.

The enzyme catalyses 4-CDP-2-C-methyl-D-erythritol + ATP = 4-CDP-2-C-methyl-D-erythritol 2-phosphate + ADP + H(+). The protein operates within isoprenoid biosynthesis; isopentenyl diphosphate biosynthesis via DXP pathway; isopentenyl diphosphate from 1-deoxy-D-xylulose 5-phosphate: step 3/6. Catalyzes the phosphorylation of the position 2 hydroxy group of 4-diphosphocytidyl-2C-methyl-D-erythritol. In Chlorobium luteolum (strain DSM 273 / BCRC 81028 / 2530) (Pelodictyon luteolum), this protein is 4-diphosphocytidyl-2-C-methyl-D-erythritol kinase.